The following is a 61-amino-acid chain: Keratin-associated protein 8-1 (61 aa).

The 11 X 2 AA repeats of G-[YCGS] stretch occupies residues 13–49 (GCYWGSYGYPLGYSVGCGYGSTYSPVGYGLGYGYNGC).

The protein belongs to the KRTAP type 8 family. Interacts with hair keratins. In terms of tissue distribution, expression restricted exclusively to the cortical cells of hair follicles.

Functionally, in the hair cortex, hair keratin intermediate filaments are embedded in an interfilamentous matrix, consisting of hair keratin-associated proteins (KRTAP), which are essential for the formation of a rigid and resistant hair shaft through their extensive disulfide bond cross-linking with abundant cysteine residues of hair keratins. The matrix proteins include the high-sulfur and high-glycine-tyrosine keratins. The sequence is that of Keratin-associated protein 8-1 (Krtap8-1) from Mus musculus (Mouse).